The sequence spans 1211 residues: Endoplasmic reticulum transmembrane helix translocase (1211 aa).

The Cytoplasmic portion of the chain corresponds to 1 to 23 (MGSKALITSPDISSGQLYIKLPT). A helical transmembrane segment spans residues 24–44 (FFHLYVWPFALFVYPYIGYVY). The Lumenal segment spans residues 45-54 (QNKLYSEEVR). The helical transmembrane segment at 55-75 (YLTYIAVGTIHALFWLAGEWN) threads the bilayer. Residues 76–191 (TKVYCLMTCR…FDIPIPTFGT (116 aa)) are Cytoplasmic-facing. The interval 155-185 (TIGTLKKSTGLTNIQSEIFLYRYGKNCFDIP) is A-domain; part 1. The helical transmembrane segment at 192–212 (LFKEHAVAPFFVFQIFCCVLW) threads the bilayer. The Lumenal portion of the chain corresponds to 213-216 (CLDD). A helical transmembrane segment spans residues 217–237 (YWYFSLFSMFMIIALECSVVW). The Cytoplasmic portion of the chain corresponds to 238-397 (QRQRTLTEFR…EKVTANNRES (160 aa)). The tract at residues 250-388 (SIKPYEIQVY…LVRTMVFSSE (139 aa)) is A-domain; part 2. A helical membrane pass occupies residues 398–418 (LYFILFLLVFAIAASGYVWHV). Residues 419–1057 (GSKTERSRYK…KERPQAGIFN (639 aa)) lie on the Lumenal side of the membrane. The tract at residues 464-493 (YIYCTEPFRIPLSGHLDICCFDKTGTLTEE) is P-domain; part 1. D485 functions as the 4-aspartylphosphate intermediate in the catalytic mechanism. Residues D485 and T487 each coordinate Mg(2+). Residues 485 to 487 (DKT), F587, R644, D710, and 824 to 828 (DGTND) each bind ATP. Residues 495 to 685 (MVVQGIAGVN…FAGFLIFTSP (191 aa)) form an N-domain region. Positions 688-845 (EDARQTVQML…HVGVALLNAS (158 aa)) are P-domain; part 2. D824 serves as a coordination point for Mg(2+). An arm-like region spans residues 846 to 955 (EEDMLEMQER…NASDDEAPKL (110 aa)). Residues 956 to 971 (KLGDASVAAPFTSKLA) are P-domain; part 3. The helical transmembrane segment at 1058 to 1078 (TYIIGSVLGQFAIHIVTLIYI) threads the bilayer. At 1079-1100 (TRVVYLYEDPLEKVDLEETFKP) the chain is on the cytoplasmic side. A helical membrane pass occupies residues 1101 to 1121 (SLLNTAIYLLQLIQQVSTFAI). The Lumenal segment spans residues 1122 to 1136 (NYQGRPFREALSENK). Residues 1137–1157 (GMYYGLLGIAFVAIAGVTEFS) traverse the membrane as a helical segment. The Cytoplasmic portion of the chain corresponds to 1158 to 1174 (PELNAKLQLVKMAYNFQ). The chain crosses the membrane as a helical span at residues 1175–1195 (IQLLATMVVDYAACWIIEELM). Residues 1196-1211 (KKYFRDNKPKEIVLRN) lie on the Lumenal side of the membrane.

This sequence belongs to the cation transport ATPase (P-type) (TC 3.A.3) family. Type V subfamily. Requires Mg(2+) as cofactor.

The protein resides in the endoplasmic reticulum membrane. It catalyses the reaction [protein]-with a C-terminal TM segment(out) + ATP + H2O = [protein]-with a C-terminal TM segment(in) + ADP + phosphate + H(+). Endoplasmic reticulum translocase required to remove mitochondrial transmembrane proteins mistargeted to the endoplasmic reticulum. Acts as a dislocase that mediates the ATP-dependent extraction of mislocalized mitochondrial transmembrane proteins from the endoplasmic reticulum membrane. Specifically binds mitochondrial tail-anchored transmembrane proteins: has an atypically large substrate-binding pocket that recognizes and binds moderately hydrophobic transmembranes with short hydrophilic lumenal domains. Involved in controlling nuclear calcium ion levels. Required for cytokinesis and stabilizing microtubules. Required for assembly of the forespore membrane. Involved in calcium transport to the endoplasmic reticulum. In Schizosaccharomyces pombe (strain 972 / ATCC 24843) (Fission yeast), this protein is Endoplasmic reticulum transmembrane helix translocase.